A 101-amino-acid chain; its full sequence is Large ribosomal subunit protein uL24 (101 aa).

It belongs to the universal ribosomal protein uL24 family. As to quaternary structure, part of the 50S ribosomal subunit.

One of two assembly initiator proteins, it binds directly to the 5'-end of the 23S rRNA, where it nucleates assembly of the 50S subunit. Functionally, one of the proteins that surrounds the polypeptide exit tunnel on the outside of the subunit. In Streptococcus equi subsp. zooepidemicus (strain H70), this protein is Large ribosomal subunit protein uL24.